The primary structure comprises 263 residues: Undecaprenyl-diphosphatase (263 aa).

The next 8 membrane-spanning stretches (helical) occupy residues 1–21 (MSYL…FLPI), 41–61 (FTKA…LVLY), 69–89 (WGFY…GFVV), 96–116 (LMGS…ILIW), 147–167 (AIAM…GLTL), 177–197 (FSFF…LLKI), 208–228 (LLLV…KFFI), and 238–258 (GFGY…YTGH).

The protein belongs to the UppP family.

It localises to the cell inner membrane. It catalyses the reaction di-trans,octa-cis-undecaprenyl diphosphate + H2O = di-trans,octa-cis-undecaprenyl phosphate + phosphate + H(+). Catalyzes the dephosphorylation of undecaprenyl diphosphate (UPP). Confers resistance to bacitracin. In Bdellovibrio bacteriovorus (strain ATCC 15356 / DSM 50701 / NCIMB 9529 / HD100), this protein is Undecaprenyl-diphosphatase.